The sequence spans 202 residues: GMP synthase [glutamine-hydrolyzing] subunit A (202 aa).

The region spanning 4 to 194 (KIYVVDNGGQ…IAICQQHKEK (191 aa)) is the Glutamine amidotransferase type-1 domain. The Nucleophile role is filled by Cys-81. Active-site residues include His-168 and Glu-170.

As to quaternary structure, heterodimer composed of a glutamine amidotransferase subunit (A) and a GMP-binding subunit (B).

The enzyme catalyses XMP + L-glutamine + ATP + H2O = GMP + L-glutamate + AMP + diphosphate + 2 H(+). It functions in the pathway purine metabolism; GMP biosynthesis; GMP from XMP (L-Gln route): step 1/1. Catalyzes the synthesis of GMP from XMP. The polypeptide is GMP synthase [glutamine-hydrolyzing] subunit A (Thermoplasma volcanium (strain ATCC 51530 / DSM 4299 / JCM 9571 / NBRC 15438 / GSS1)).